Here is a 232-residue protein sequence, read N- to C-terminus: Small ribosomal subunit protein uS2 (232 aa).

This sequence belongs to the universal ribosomal protein uS2 family.

This Syntrophomonas wolfei subsp. wolfei (strain DSM 2245B / Goettingen) protein is Small ribosomal subunit protein uS2.